The primary structure comprises 258 residues: Ribonuclease HII (258 aa).

Positions 71–258 (ELIAGIDEVG…PIKSMVNFKY (188 aa)) constitute an RNase H type-2 domain. Positions 77, 78, and 169 each coordinate a divalent metal cation.

The protein belongs to the RNase HII family. The cofactor is Mn(2+). Mg(2+) is required as a cofactor.

Its subcellular location is the cytoplasm. The enzyme catalyses Endonucleolytic cleavage to 5'-phosphomonoester.. In terms of biological role, endonuclease that specifically degrades the RNA of RNA-DNA hybrids. The protein is Ribonuclease HII of Lactococcus lactis subsp. cremoris (strain SK11).